Reading from the N-terminus, the 456-residue chain is High mobility group B protein 6 (456 aa).

Disordered stretches follow at residues 1-42 (MATN…KSAK), 117-142 (SSLT…KRPS), 238-258 (AEQD…PKHP), and 349-389 (MLKK…YFLF). The span at 11–21 (KKPRNSRKALK) shows a compositional bias: basic residues. The segment at residues 138 to 206 (TKRPSSSYVL…AYLQVIAKEK (69 aa)) is a DNA-binding region (HMG box 1). The span at 240–254 (QDNKKKNKKEKDPLK) shows a compositional bias: basic and acidic residues. The HMG box 2 DNA-binding region spans 255 to 321 (PKHPVSAFLV…TYLQAMEEYK (67 aa)). Residues 354-363 (EKTDNLIKKE) show a composition bias toward basic and acidic residues. The segment at residues 379–447 (PKKPASSYFL…AYKKEVEAYN (69 aa)) is a DNA-binding region (HMG box 3).

It localises to the nucleus. In Arabidopsis thaliana (Mouse-ear cress), this protein is High mobility group B protein 6 (HMGB6).